We begin with the raw amino-acid sequence, 31 residues long: Cyclotide mden-K (31 aa).

Residues 1–31 (GSIPCGESCVWIPCISSVVGCACKNKVCYKN) constitute a cross-link (cyclopeptide (Gly-Asn)). 3 disulfide bridges follow: cysteine 5–cysteine 21, cysteine 9–cysteine 23, and cysteine 14–cysteine 28.

The protein belongs to the cyclotide family. Bracelet subfamily. Post-translationally, this is a cyclic peptide.

Its function is as follows. Probably participates in a plant defense mechanism. The sequence is that of Cyclotide mden-K from Melicytus dentatus (Tree violet).